Consider the following 575-residue polypeptide: NEDD4-binding protein 2-like 2 (575 aa).

Basic and acidic residues-rich tracts occupy residues 69–87 (QEDK…EMPG), 129–142 (PPEK…KSET), and 149–167 (DSKR…KLEM). Disordered regions lie at residues 69–169 (QEDK…EMDT) and 555–575 (GEQR…ADDY). Positions 162 to 194 (SKKLEMDTELSQFYKEIEELENENEASQGSCTE) form a coiled coil. Polar residues predominate over residues 564 to 575 (GSHSQVSIADDY).

This chain is NEDD4-binding protein 2-like 2 (N4bp2l2), found in Mus musculus (Mouse).